The sequence spans 357 residues: Peptide chain release factor 1 (357 aa).

Glutamine 232 is subject to N5-methylglutamine. The span at 282-291 (KQRAEQEAAR) shows a compositional bias: basic and acidic residues. A disordered region spans residues 282–302 (KQRAEQEAARRSQVGTGDRSE).

This sequence belongs to the prokaryotic/mitochondrial release factor family. In terms of processing, methylated by PrmC. Methylation increases the termination efficiency of RF1.

The protein localises to the cytoplasm. In terms of biological role, peptide chain release factor 1 directs the termination of translation in response to the peptide chain termination codons UAG and UAA. This Solidesulfovibrio magneticus (strain ATCC 700980 / DSM 13731 / RS-1) (Desulfovibrio magneticus) protein is Peptide chain release factor 1.